The chain runs to 246 residues: Acetoacetyl-CoA reductase (246 aa).

Residues 12-14 and 88-92 contribute to the NADP(+) site; these read GGI and CAGIT. Residues aspartate 94 and 147 to 150 contribute to the substrate site; that span reads QFGQ. Catalysis depends on tyrosine 153, which acts as the Proton acceptor. Residue 183 to 186 participates in NADP(+) binding; sequence PGYV. 184–185 contributes to the substrate binding site; it reads GY.

The protein belongs to the short-chain dehydrogenases/reductases (SDR) family.

It localises to the cytoplasm. The enzyme catalyses a (3R)-3-hydroxyacyl-CoA + NADP(+) = a 3-oxoacyl-CoA + NADPH + H(+). It functions in the pathway biopolymer metabolism; poly-(R)-3-hydroxybutanoate biosynthesis. The sequence is that of Acetoacetyl-CoA reductase from Allochromatium vinosum (strain ATCC 17899 / DSM 180 / NBRC 103801 / NCIMB 10441 / D) (Chromatium vinosum).